The chain runs to 362 residues: DNA replication and repair protein RecF (362 aa).

31 to 38 (GDNAAGKT) serves as a coordination point for ATP.

This sequence belongs to the RecF family.

It is found in the cytoplasm. Functionally, the RecF protein is involved in DNA metabolism; it is required for DNA replication and normal SOS inducibility. RecF binds preferentially to single-stranded, linear DNA. It also seems to bind ATP. The sequence is that of DNA replication and repair protein RecF from Hydrogenovibrio crunogenus (strain DSM 25203 / XCL-2) (Thiomicrospira crunogena).